The primary structure comprises 707 residues: MNPVKKTFQYGHSTVTLETGRIARQATGAVMVTMDDTVVLCTVVAKKDVNPAQPFFPLSVHYQEKTYAVGKIPGGFFKREGRPTEKETLTSRLIDRPIRPLFPNGFMNEVQVVCTVLSTDRNHDPDIAAMLGTSAALAISGVPFNGPIGAARVGFNEDKGYFLNPTVEELESSELNMVVAGTEKAVLMVESEAKELLEDEMLGAVLFGHQEMQAAITAIQALADEAGKPRWDWQPPTDDTTLKSALAAEFEAKVGEAYRITDKMARQDALSALKDEALERLAGEESGQYAADDVKGAFASLEKRVVRSRIIQGEPRIDGRDHRTVRPLSIEVGTLPKTHGSAVFTRGETQAVVVATLGTLRDAQLIESLEGERKDRFLLHYNFPPYSVGEAGFMGGPKRREIGHGRLARRGVQAMLPSEEDFPYTIRVVSEITESNGSSSMASVCGSSLALMDAGVPLKAPVAGIAMGLVKDEDGFAVLTDILGDEDHLGDMDFKVAGSTAGVTALQMDIKIEGINEEIMETALQQAHEARLHILEQMNTVIAQSRSEVSDNAPSMATIKIDPDKIRDVIGKGGATIRKICDDTGASIDLDDDGTVRIYAEDKTAAKAAIDTVLAITAEPEIGKLYRGTVARITDFGAFVTFMPGTDGLVHISQIVPERVNDVRDYLSEGQEVIVKVLDIDNRNRVKLSIKEVTAEEKAAFEATPAE.

Mg(2+) contacts are provided by aspartate 487 and aspartate 493. The region spanning 554 to 613 is the KH domain; that stretch reads PSMATIKIDPDKIRDVIGKGGATIRKICDDTGASIDLDDDGTVRIYAEDKTAAKAAIDTV. Residues 623–691 form the S1 motif domain; it reads GKLYRGTVAR…NRNRVKLSIK (69 aa).

This sequence belongs to the polyribonucleotide nucleotidyltransferase family. As to quaternary structure, component of the RNA degradosome, which is a multiprotein complex involved in RNA processing and mRNA degradation. Mg(2+) is required as a cofactor.

Its subcellular location is the cytoplasm. It catalyses the reaction RNA(n+1) + phosphate = RNA(n) + a ribonucleoside 5'-diphosphate. Its function is as follows. Involved in mRNA degradation. Catalyzes the phosphorolysis of single-stranded polyribonucleotides processively in the 3'- to 5'-direction. In Chromohalobacter salexigens (strain ATCC BAA-138 / DSM 3043 / CIP 106854 / NCIMB 13768 / 1H11), this protein is Polyribonucleotide nucleotidyltransferase.